The chain runs to 440 residues: MSVKATVALVGRPNVGKSALFNRIVGQRISIVDDTPGVTRDRIDGKGEWSGHSFNLIDTGGIFDEEDDILKQVVIQAEVAIDEADVIVFVTDGRDGITPADEEVAATLRKTKKPVLVAVNKSEGNYDQYAMEFYQLGFEQVISISALHGTNTGQLLDEIVELLPEQEYEELNYHEDDIMLSVIGRPNVGKSSLINKILNKERLIVSNMPGTTRDAIDTVIEREDQKYVFIDTAGLRKKSKIDERLEKYSVIRSIKGMERSNIALLLIDVTKGILEQDKKIAGLAEEKGKGLIILLNKWDAIEKDGKAGDKYYETVRLELPSVNYAPIMFLSAQTGKNVEKIFPVIDKVSKEHSKRITTADVNRVIEDAVNYTPPPSKKGKRLKIYYATQVRTRPPTFVLFVNNPELMKNSYKRYLQNQLRRAFGFEGTPIRILERVKQRR.

EngA-type G domains lie at 5 to 167 (ATVA…PEQE) and 178 to 353 (IMLS…KEHS). GTP-binding positions include 11–18 (GRPNVGKS), 58–62 (DTGGI), 120–123 (NKSE), 184–191 (GRPNVGKS), 231–235 (DTAGL), and 296–299 (NKWD). A KH-like domain is found at 354–438 (KRITTADVNR…PIRILERVKQ (85 aa)).

This sequence belongs to the TRAFAC class TrmE-Era-EngA-EngB-Septin-like GTPase superfamily. EngA (Der) GTPase family. As to quaternary structure, associates with the 50S ribosomal subunit.

GTPase that plays an essential role in the late steps of ribosome biogenesis. This Natranaerobius thermophilus (strain ATCC BAA-1301 / DSM 18059 / JW/NM-WN-LF) protein is GTPase Der.